A 501-amino-acid chain; its full sequence is Aspartate--tRNA ligase, cytoplasmic (501 aa).

Thr52 carries the phosphothreonine modification. At Lys74 the chain carries N6-acetyllysine. Glu229 is an L-aspartate binding site. A Phosphoserine modification is found at Ser249. The aspartate stretch occupies residues Gln251 to Lys254. Arg273 lines the L-aspartate pocket. ATP contacts are provided by residues Arg273–Glu275 and Arg281–Leu283. Residue Lys374 is modified to N6-acetyllysine. The tract at residues Lys411–Ser415 is binding site for the 3'-end of tRNA. Glu424 provides a ligand contact to ATP. L-aspartate-binding residues include Ser427 and Arg431. Gly472–Arg475 provides a ligand contact to ATP. At Thr500 the chain carries Phosphothreonine; by PKA.

It belongs to the class-II aminoacyl-tRNA synthetase family. Type 2 subfamily. Homodimer. Part of a multisubunit complex that groups tRNA ligases for Arg (RARS1), Asp (DARS1), Gln (QARS1), Ile (IARS1), Leu (LARS1), Lys (KARS1), Met (MARS1) the bifunctional ligase for Glu and Pro (EPRS1) and the auxiliary subunits AIMP1/p43, AIMP2/p38 and EEF1E1/p18.

It localises to the cytoplasm. The enzyme catalyses tRNA(Asp) + L-aspartate + ATP = L-aspartyl-tRNA(Asp) + AMP + diphosphate. Functionally, catalyzes the specific attachment of an amino acid to its cognate tRNA in a 2 step reaction: the amino acid (AA) is first activated by ATP to form AA-AMP and then transferred to the acceptor end of the tRNA. This Pongo abelii (Sumatran orangutan) protein is Aspartate--tRNA ligase, cytoplasmic (DARS1).